The primary structure comprises 166 residues: Large ribosomal subunit protein uL11 (166 aa).

This sequence belongs to the universal ribosomal protein uL11 family.

The sequence is that of Large ribosomal subunit protein uL11 (rpl12) from Dictyostelium discoideum (Social amoeba).